Consider the following 269-residue polypeptide: Formamidopyrimidine-DNA glycosylase (269 aa).

Pro2 serves as the catalytic Schiff-base intermediate with DNA. Glu3 serves as the catalytic Proton donor. Catalysis depends on Lys57, which acts as the Proton donor; for beta-elimination activity. DNA contacts are provided by His90, Arg109, and Lys150. Residues Gln235 to Cys269 form an FPG-type zinc finger. Catalysis depends on Arg259, which acts as the Proton donor; for delta-elimination activity.

It belongs to the FPG family. As to quaternary structure, monomer. Requires Zn(2+) as cofactor.

The enzyme catalyses Hydrolysis of DNA containing ring-opened 7-methylguanine residues, releasing 2,6-diamino-4-hydroxy-5-(N-methyl)formamidopyrimidine.. It carries out the reaction 2'-deoxyribonucleotide-(2'-deoxyribose 5'-phosphate)-2'-deoxyribonucleotide-DNA = a 3'-end 2'-deoxyribonucleotide-(2,3-dehydro-2,3-deoxyribose 5'-phosphate)-DNA + a 5'-end 5'-phospho-2'-deoxyribonucleoside-DNA + H(+). In terms of biological role, involved in base excision repair of DNA damaged by oxidation or by mutagenic agents. Acts as a DNA glycosylase that recognizes and removes damaged bases. Has a preference for oxidized purines, such as 7,8-dihydro-8-oxoguanine (8-oxoG). Has AP (apurinic/apyrimidinic) lyase activity and introduces nicks in the DNA strand. Cleaves the DNA backbone by beta-delta elimination to generate a single-strand break at the site of the removed base with both 3'- and 5'-phosphates. This chain is Formamidopyrimidine-DNA glycosylase, found in Vibrio vulnificus (strain CMCP6).